The chain runs to 479 residues: MSDVTIVKEGWVQKRGEYIKNWRPRYFLLKTDGSFIGYKEKPQDVDLPYPLNNFSVAKCQLMKTERPKPNTFIIRCLQWTTVIERTFHVDTPEEREEWTEAIQAVADRLQRQEEERMNCSPTSQIDNIGEEEMDASTTHHKRKTMNDFDYLKLLGKGTFGKVILVREKASGKYYAMKILKKEVIIAKDEVAHTLTESRVLKNTRHPFLTSLKYSFQTKDRLCFVMEYVNGGELFFHLSRERVFSEDRTRFYGAEIVSALDYLHSGKIVYRDLKLENLMLDKDGHIKITDFGLCKEGITDAATMKTFCGTPEYLAPEVLEDNDYGRAVDWWGLGVVMYEMMCGRLPFYNQDHEKLFELILMEDIKFPRTLSSDAKSLLSGLLIKDPNKRLGGGPDDAKEIMRHSFFSGVNWQDVYDKKLVPPFKPQVTSETDTRYFDEEFTAQTITITPPEKYDDDGMDGMDNERRPHFPQFSYSASGRE.

Serine 2 is subject to N-acetylserine. The PH domain maps to 5-107; the sequence is TIVKEGWVQK…WTEAIQAVAD (103 aa). The cysteines at positions 59 and 76 are disulfide-linked. A Protein kinase domain is found at 148–405; that stretch reads FDYLKLLGKG…AKEIMRHSFF (258 aa). Residues 154–162 and lysine 177 each bind ATP; that span reads LGKGTFGKV. Residue aspartate 271 is the Proton acceptor of the active site. A disulfide bridge connects residues cysteine 293 and cysteine 307. A glycan (O-linked (GlcNAc) threonine) is linked at threonine 302. At threonine 305 the chain carries Phosphothreonine; by PDPK1. Threonine 309 carries an O-linked (GlcNAc) threonine glycan. In terms of domain architecture, AGC-kinase C-terminal spans 406–479; sequence SGVNWQDVYD…QFSYSASGRE (74 aa). A disordered region spans residues 445–479; sequence TITPPEKYDDDGMDGMDNERRPHFPQFSYSASGRE. A Phosphothreonine modification is found at threonine 447. The residue at position 472 (serine 472) is a Phosphoserine; by PKC/PRKCZ. Serine 472 carries O-linked (GlcNAc) serine; alternate glycosylation.

It belongs to the protein kinase superfamily. AGC Ser/Thr protein kinase family. RAC subfamily. Interacts (via PH domain) with TCL1A; this enhances AKT3 phosphorylation and activation. Interacts with TRAF6. Interacts with KCTD20. Interacts with BTBD10. Post-translationally, phosphorylation on Thr-305 and Ser-472 is required for full activity. Phosphorylation of the activation loop at Thr-305 by PDPK1/PDK1 is a prerequisite for full activation. Phosphorylation at Ser-472 by mTORC2 in response to growth factors plays a key role in AKT1 activation by facilitating subsequent phosphorylation of the activation loop by PDPK1/PDK1. Ubiquitinated. When fully phosphorylated and translocated into the nucleus, undergoes 'Lys-48'-polyubiquitination catalyzed by TTC3, leading to its degradation by the proteasome. In terms of processing, O-GlcNAcylation at Thr-302 and Thr-309 inhibits activating phosphorylation at Thr-305 via disrupting the interaction between AKT and PDPK1/PDK1. Isoform 1 is expressed in prostate, testis, uterus and mammary gland and isoform 2 is expressed in prostate, testis and mammary gland.

It localises to the nucleus. The protein localises to the cytoplasm. It is found in the membrane. It catalyses the reaction L-seryl-[protein] + ATP = O-phospho-L-seryl-[protein] + ADP + H(+). The enzyme catalyses L-threonyl-[protein] + ATP = O-phospho-L-threonyl-[protein] + ADP + H(+). Two specific sites, one in the kinase domain (Thr-305) and the other in the C-terminal regulatory region (Ser-472), need to be phosphorylated for its full activation. IGF-1 leads to the activation of AKT3, which may play a role in regulating cell survival. AKT3 is one of 3 closely related serine/threonine-protein kinases (AKT1, AKT2 and AKT3) called the AKT kinase, and which regulate many processes including metabolism, proliferation, cell survival, growth and angiogenesis. This is mediated through serine and/or threonine phosphorylation of a range of downstream substrates. Over 100 substrate candidates have been reported so far, but for most of them, no isoform specificity has been reported. AKT3 is the least studied AKT isoform. It plays an important role in brain development and is crucial for the viability of malignant glioma cells. AKT3 isoform may also be the key molecule in up-regulation and down-regulation of MMP13 via IL13. Required for the coordination of mitochondrial biogenesis with growth factor-induced increases in cellular energy demands. Down-regulation by RNA interference reduces the expression of the phosphorylated form of BAD, resulting in the induction of caspase-dependent apoptosis. This chain is RAC-gamma serine/threonine-protein kinase (Akt3), found in Mus musculus (Mouse).